The following is a 5386-amino-acid chain: Nonribosomal peptide synthetase 2 (5386 aa).

Residues 45 to 435 (HDANAIDFLE…QGLLECLGRV (391 aa)) form an adenylation 1 region. Positions 544–617 (SPKDPIGHSV…DLIEVCRESK (74 aa)) constitute a Carrier 1 domain. O-(pantetheine 4'-phosphoryl)serine is present on S578. The interval 652-1059 (LPCTPLQEAM…VDADRHVSAI (408 aa)) is condensation 1. The segment at 1089–1482 (EKWAATDPHR…GRTDDQVKIR (394 aa)) is adenylation 2. The Carrier 2 domain maps to 1611–1688 (ELLSQWERDV…SLASLKKLQS (78 aa)). Residue S1648 is modified to O-(pantetheine 4'-phosphoryl)serine. A condensation 2 region spans residues 1731–2141 (ILPCTPLQEA…ALSADTDMFP (411 aa)). The adenylation 3 stretch occupies residues 2166 to 2551 (FERTALLHPD…GRLDDQVKIR (386 aa)). The Carrier 3 domain occupies 2652–2725 (SKTESEVRNI…DLAEHLDQIS (74 aa)). The residue at position 2686 (S2686) is an O-(pantetheine 4'-phosphoryl)serine. Residues 2763 to 3174 (RPCTPLQNGM…HSQIPLAKTD (412 aa)) are condensation 3. The segment at 3202 to 3603 (EKTAQEHPQR…GRADDQVKLR (402 aa)) is adenylation 4. One can recognise a Carrier 4 domain in the interval 3728–3805 (EQWSKQEEKL…RLAKSLAANS (78 aa)). S3765 carries the O-(pantetheine 4'-phosphoryl)serine modification. The segment at 3846–4250 (LAPCTPLQQG…LDQAINDPSA (405 aa)) is condensation 4. Residues 4281–4357 (FEWSDNAIAI…KMAQNMSMKN (77 aa)) form the Carrier 5 domain. Position 4318 is an O-(pantetheine 4'-phosphoryl)serine (S4318). The segment at 4391 to 4802 (EEILPLTPLQ…ERAEAPVIDM (412 aa)) is condensation 5. A disordered region spans residues 4821-4842 (HTGSGHVESGEDDGQDTPSTET). The region spanning 4840–4913 (TETTNRIRKI…KMAKLADARA (74 aa)) is the Carrier 6 domain. The residue at position 4874 (S4874) is an O-(pantetheine 4'-phosphoryl)serine. The tract at residues 4952–5257 (QMLPVTAGQL…VQAHLRHLND (306 aa)) is condensation 6.

It belongs to the NRP synthetase family.

It participates in siderophore biosynthesis. In terms of biological role, nonribosomal peptide synthetase; part of the gene cluster that mediates the biosynthesis of hydroxamate-containing siderophores that play a critical role in virulence. Cochliobolus heterostrophus produces extracellular coprogen-type siderophores including coprogen, neocoprogen I and neocoprogen II, as well as the intracellular siderophore ferricrocin. The role of extracellular siderophores is to supply iron to the fungus during plant infection, and the intracellular ferricrocin is required for intracellular iron distribution and storage with a crucial role in ascus and ascospore development. SIDA2 catalyzes the conversion of L-ornithine to N(5)-hydroxyornithine, the first step in the biosynthesis of all hydroxamate-containing siderophores. The assembly of extracellular coprogen-type siderophores is then performed by the nonribosomal peptide synthetase (NRPS) NPS6 whereas the intracellular siderophore ferricrocin is assembled by NPS2. This chain is Nonribosomal peptide synthetase 2, found in Cochliobolus heterostrophus (strain C4 / ATCC 48331 / race T) (Southern corn leaf blight fungus).